The primary structure comprises 134 residues: MCPSSFRLILSVILIAFLFVGLCEAHRHINVDIINDIGPNVQLGLHCKSKGKDLGPQSLAPHQHWGFTASLNVWETTLFFCHFVWENQSRWFDILKEKRDTIVCKYHPCVWSIRPSGPCRLTDHEKCYPCNADI.

Positions 1–25 (MCPSSFRLILSVILIAFLFVGLCEA) are cleaved as a signal peptide. The N-linked (GlcNAc...) asparagine glycan is linked to Asn-87.

It belongs to the plant self-incompatibility (S1) protein family.

The protein resides in the secreted. This is S-protein homolog 18 from Arabidopsis thaliana (Mouse-ear cress).